The chain runs to 129 residues: Glycine cleavage system H protein (129 aa).

A Lipoyl-binding domain is found at 24 to 106 (TFTVGISEHA…YGDGWLFRIK (83 aa)). The residue at position 65 (Lys65) is an N6-lipoyllysine.

This sequence belongs to the GcvH family. As to quaternary structure, the glycine cleavage system is composed of four proteins: P, T, L and H. The cofactor is (R)-lipoate.

Its function is as follows. The glycine cleavage system catalyzes the degradation of glycine. The H protein shuttles the methylamine group of glycine from the P protein to the T protein. This Pseudoalteromonas atlantica (strain T6c / ATCC BAA-1087) protein is Glycine cleavage system H protein.